The primary structure comprises 380 residues: Erythronate-4-phosphate dehydrogenase (380 aa).

Residues S45 and T66 each contribute to the substrate site. D146 and T174 together coordinate NAD(+). R207 is a catalytic residue. D231 lines the NAD(+) pocket. The active site involves E236. The Proton donor role is filled by H253. G256 lines the NAD(+) pocket. Residue Y257 participates in substrate binding.

This sequence belongs to the D-isomer specific 2-hydroxyacid dehydrogenase family. PdxB subfamily. Homodimer.

It is found in the cytoplasm. The enzyme catalyses 4-phospho-D-erythronate + NAD(+) = (R)-3-hydroxy-2-oxo-4-phosphooxybutanoate + NADH + H(+). The protein operates within cofactor biosynthesis; pyridoxine 5'-phosphate biosynthesis; pyridoxine 5'-phosphate from D-erythrose 4-phosphate: step 2/5. Functionally, catalyzes the oxidation of erythronate-4-phosphate to 3-hydroxy-2-oxo-4-phosphonooxybutanoate. This Pseudomonas fluorescens (strain ATCC BAA-477 / NRRL B-23932 / Pf-5) protein is Erythronate-4-phosphate dehydrogenase.